Here is a 196-residue protein sequence, read N- to C-terminus: Phosphoheptose isomerase (196 aa).

An SIS domain is found at 36 to 196; sequence MVACLMNEGK…AVDYMLLGGD (161 aa). 51–53 provides a ligand contact to substrate; the sequence is NGG. Zn(2+)-binding residues include histidine 60 and glutamate 64. Substrate contacts are provided by residues glutamate 64, 93–94, 119–121, serine 124, and glutamine 174; these read ND and STS. Glutamine 174 and histidine 182 together coordinate Zn(2+).

Belongs to the SIS family. GmhA subfamily. Homotetramer. Zn(2+) serves as cofactor.

The protein localises to the cytoplasm. It catalyses the reaction 2 D-sedoheptulose 7-phosphate = D-glycero-alpha-D-manno-heptose 7-phosphate + D-glycero-beta-D-manno-heptose 7-phosphate. It participates in carbohydrate biosynthesis; D-glycero-D-manno-heptose 7-phosphate biosynthesis; D-glycero-alpha-D-manno-heptose 7-phosphate and D-glycero-beta-D-manno-heptose 7-phosphate from sedoheptulose 7-phosphate: step 1/1. Catalyzes the isomerization of sedoheptulose 7-phosphate in D-glycero-D-manno-heptose 7-phosphate. The chain is Phosphoheptose isomerase from Laribacter hongkongensis (strain HLHK9).